Here is a 156-residue protein sequence, read N- to C-terminus: Small ribosomal subunit protein uS7 (156 aa).

It belongs to the universal ribosomal protein uS7 family. As to quaternary structure, part of the 30S ribosomal subunit. Contacts proteins S9 and S11.

Its function is as follows. One of the primary rRNA binding proteins, it binds directly to 16S rRNA where it nucleates assembly of the head domain of the 30S subunit. Is located at the subunit interface close to the decoding center, probably blocks exit of the E-site tRNA. The protein is Small ribosomal subunit protein uS7 of Parvibaculum lavamentivorans (strain DS-1 / DSM 13023 / NCIMB 13966).